The chain runs to 345 residues: MAANYWESTQRKHWLFTKDELAAMRAKLEAEEPNLVASFPLPQLRHLNIYFNQQINRLGKRMGLRQQALATAQVYIKRFYTKVEIRRTNPHHVLVTALYLACKMEECPQHIRLMANEARGFWPTDFQSQTEVARIGECEFYLISEMSSHLIVHSPYRTLTSLQGELGLAQEDVNLAWSVINDHYMTDLPLLHPPHVIALTAILLALVLRQDPSGRLPGTAASASGLVAASAALAQAQAQAQARAAMMAGGGQTVPGLTPQSSSGLQAMLPPQSPAGEGPAEGNKNPRMAKVHRFAAWLSDSNIDIEAMVDCTQELISFYECHEQYNDKNTREQINRFVKARGLDK.

The 92-residue stretch at 53 to 144 (QQINRLGKRM…IGECEFYLIS (92 aa)) folds into the Cyclin N-terminal domain. Positions 256 to 285 (GLTPQSSSGLQAMLPPQSPAGEGPAEGNKN) are disordered.

Belongs to the cyclin family. Cyclin C subfamily. Component of the srb8-11 complex, a regulatory module of the Mediator complex.

Its subcellular location is the nucleus. Its function is as follows. Component of the srb8-11 complex. The srb8-11 complex is a regulatory module of the Mediator complex which is itself involved in regulation of basal and activated RNA polymerase II-dependent transcription. The srb8-11 complex may be involved in the transcriptional repression of a subset of genes regulated by Mediator. It may inhibit the association of the Mediator complex with RNA polymerase II to form the holoenzyme complex. The srb8-11 complex phosphorylates the C-terminal domain (CTD) of the largest subunit of RNA polymerase II. The chain is RNA polymerase II holoenzyme cyclin-like subunit (ssn8) from Neurospora crassa (strain ATCC 24698 / 74-OR23-1A / CBS 708.71 / DSM 1257 / FGSC 987).